Reading from the N-terminus, the 312-residue chain is DNA-directed RNA polymerase subunit alpha (312 aa).

Positions 1–229 are alpha N-terminal domain (alpha-NTD); the sequence is MLQYQIDRID…ELFQPLATVT (229 aa). Positions 240 to 312 are alpha C-terminal domain (alpha-CTD); sequence PSPEAQIPLE…ISIPQSRTSV (73 aa).

This sequence belongs to the RNA polymerase alpha chain family. In terms of assembly, in cyanobacteria the RNAP catalytic core is composed of 2 alpha, 1 beta, 1 beta', 1 gamma and 1 omega subunit. When a sigma factor is associated with the core the holoenzyme is formed, which can initiate transcription.

The enzyme catalyses RNA(n) + a ribonucleoside 5'-triphosphate = RNA(n+1) + diphosphate. Its function is as follows. DNA-dependent RNA polymerase catalyzes the transcription of DNA into RNA using the four ribonucleoside triphosphates as substrates. The chain is DNA-directed RNA polymerase subunit alpha from Prochlorococcus marinus (strain AS9601).